Consider the following 82-residue polypeptide: U1-plectoxin-Pt1a (82 aa).

An N-terminal signal peptide occupies residues 1–20; that stretch reads MKHLIFSSALVCALVVCTFA. The propeptide occupies 21 to 33; the sequence is EEQVNVPFLPDER. Intrachain disulfides connect C37–C51, C44–C57, C50–C68, C54–C77, and C59–C66. The O-palmitoyl serine moiety is linked to residue S79. Residues 80–82 constitute a propeptide that is removed on maturation; it reads RRR.

It belongs to the neurotoxin 02 (plectoxin) family. 02 (plectoxin) subfamily. Plectoxin-5 presumably undergoes post-translational modification to give rise to plectoxin-6. As to expression, expressed by the venom gland.

The protein localises to the secreted. Its function is as follows. Potent toxin that may paralyze and/or kill insect pests such as H.virescens (lepidoptera), S.exigua (beet armyworm) and M.sexta (tobacco hornworm). The protein is U1-plectoxin-Pt1a of Plectreurys tristis (Spider).